We begin with the raw amino-acid sequence, 339 residues long: MLYSLAQKFMFQMDAEQAHDLAIKSLKFTANSPLACGYSQALQSSPVNCMGITFPNPVGLAAGLDKDGEAIDAFHAMGFGFVEVGTVTPKPQAGNDKPRLFRLTKAKAIINRMGFNNKGVDNLVRNLQAKKTDILVGVNIGKNKDTPVEQGKDDYLICMDKVYPYAAYITVNISSPNTPGLRTMQYGALLDELLASIKAKQAELAEKYHRYVPVALKIAPDLTADEIESIAMSLISNQFDAVIATNTTLSRDGVEGMTHGTEMGGLSGAPLTAASTMVIKQLASFLNKKIPIIGVGGINSAQDALDKFDAGANLVQIYSGFIYQGPKIIKEIVNAVKMK.

FMN-binding positions include 62–66 (AGLDK) and Thr86. Residue Lys66 coordinates substrate. 111–115 (NRMGF) serves as a coordination point for substrate. Residues Asn139 and Asn172 each contribute to the FMN site. Asn172 is a substrate binding site. The active-site Nucleophile is the Ser175. Asn177 contributes to the substrate binding site. FMN is bound by residues Lys217 and Thr245. A substrate-binding site is contributed by 246–247 (NT). FMN-binding positions include Gly268, Gly297, and 318 to 319 (YS).

It belongs to the dihydroorotate dehydrogenase family. Type 2 subfamily. Monomer. The cofactor is FMN.

Its subcellular location is the cell membrane. It carries out the reaction (S)-dihydroorotate + a quinone = orotate + a quinol. Its pathway is pyrimidine metabolism; UMP biosynthesis via de novo pathway; orotate from (S)-dihydroorotate (quinone route): step 1/1. In terms of biological role, catalyzes the conversion of dihydroorotate to orotate with quinone as electron acceptor. In Shewanella denitrificans (strain OS217 / ATCC BAA-1090 / DSM 15013), this protein is Dihydroorotate dehydrogenase (quinone).